The chain runs to 214 residues: MDPCSSLFSYVFMHLFVLCLQAQVTVQSPPNFTQHVREQSLVTDQLSRRLVRTYQLYSRTSGKHVQILDNKKINAMAEDGDVHAKLIVETDTFGSRVRIKGAATGFYICMNKKGKLIGKSNGKGKDCVFTEIVLENNYTALQNAKYEGWYMAFTRKGRPRKGSKTRQHQREVHFMKRLPKGHQTTEPHRRFEFLNYPFNRRSKRTRNSSASLRP.

An N-terminal signal peptide occupies residues 1–22 (MDPCSSLFSYVFMHLFVLCLQA). N31, N137, and N207 each carry an N-linked (GlcNAc...) asparagine glycan.

It belongs to the heparin-binding growth factors family.

It is found in the secreted. In terms of biological role, plays an important role in the regulation of embryonic development, cell proliferation, cell differentiation and cell migration. Involved in initiation, outgrowth and patterning of the limbs. The protein is Fibroblast growth factor 8 (FGF8) of Gallus gallus (Chicken).